We begin with the raw amino-acid sequence, 283 residues long: MSQGYLNFPHIDPVLIEIGPLAVRWYGLMYLFGFMFALWLANKRADKPNSGWTRDQVSDLLFAGFLGVVIGGRVGYVLFYNFGYFLDNPLYLFEVWTGGMSFHGGLLGVISAMLWYGYKNNRSFFTIADFVAPLVPFGLGAGRLGNFMNGELWGRVTDVPWAMVFPTGGPFPRHPSQLYEFALEGVVLFFILNWFIRKPRPLGAVSGLFLFGYGTFRFLVEYVRQPDAQLGLFGDWISMGQILSLPMVIGGLLMMLWAFKRNLFATDVEQNKTKSKKSKQKAK.

A run of 7 helical transmembrane segments spans residues 21-41 (LAVR…LWLA), 60-80 (LLFA…VLFY), 95-115 (VWTG…AMLW), 124-144 (FFTI…AGRL), 176-196 (SQLY…NWFI), 203-223 (GAVS…VEYV), and 239-259 (MGQI…LWAF). R143 is an a 1,2-diacyl-sn-glycero-3-phospho-(1'-sn-glycerol) binding site.

This sequence belongs to the Lgt family.

The protein localises to the cell inner membrane. The enzyme catalyses L-cysteinyl-[prolipoprotein] + a 1,2-diacyl-sn-glycero-3-phospho-(1'-sn-glycerol) = an S-1,2-diacyl-sn-glyceryl-L-cysteinyl-[prolipoprotein] + sn-glycerol 1-phosphate + H(+). Its pathway is protein modification; lipoprotein biosynthesis (diacylglyceryl transfer). Its function is as follows. Catalyzes the transfer of the diacylglyceryl group from phosphatidylglycerol to the sulfhydryl group of the N-terminal cysteine of a prolipoprotein, the first step in the formation of mature lipoproteins. This Aliivibrio fischeri (strain MJ11) (Vibrio fischeri) protein is Phosphatidylglycerol--prolipoprotein diacylglyceryl transferase.